A 304-amino-acid chain; its full sequence is Coenzyme PQQ synthesis protein B (304 aa).

The protein belongs to the PqqB family.

Its pathway is cofactor biosynthesis; pyrroloquinoline quinone biosynthesis. In terms of biological role, may be involved in the transport of PQQ or its precursor to the periplasm. The sequence is that of Coenzyme PQQ synthesis protein B from Pseudomonas aeruginosa (strain LESB58).